A 431-amino-acid polypeptide reads, in one-letter code: Hydroxylamine reductase (431 aa).

Positions 5, 8, 17, and 23 each coordinate [4Fe-4S] cluster. His131, Glu155, Cys199, Cys286, Cys314, Cys339, Glu373, and Lys375 together coordinate hybrid [4Fe-2O-2S] cluster. Cysteine persulfide is present on Cys286.

Belongs to the HCP family. [4Fe-4S] cluster is required as a cofactor. Hybrid [4Fe-2O-2S] cluster serves as cofactor.

It localises to the cytoplasm. It carries out the reaction A + NH4(+) + H2O = hydroxylamine + AH2 + H(+). In terms of biological role, catalyzes the reduction of hydroxylamine to form NH(3) and H(2)O. The chain is Hydroxylamine reductase from Thermotoga maritima (strain ATCC 43589 / DSM 3109 / JCM 10099 / NBRC 100826 / MSB8).